A 263-amino-acid polypeptide reads, in one-letter code: PDZ domain-containing protein 9 (263 aa).

The PDZ domain maps to 30–109; it reads QTKLTVGSMG…GTILQIKVYR (80 aa).

This is PDZ domain-containing protein 9 (PDZD9) from Bos taurus (Bovine).